A 305-amino-acid chain; its full sequence is Translation initiation factor eIF2B subunit alpha (305 aa).

The protein belongs to the eIF-2B alpha/beta/delta subunits family. Component of the translation initiation factor 2B (eIF2B) complex which is a heterodecamer of two sets of five different subunits: alpha, beta, gamma, delta and epsilon. Subunits alpha, beta and delta comprise a regulatory subcomplex and subunits epsilon and gamma comprise a catalytic subcomplex. Within the complex, the hexameric regulatory complex resides at the center, with the two heterodimeric catalytic subcomplexes bound on opposite sides.

It is found in the cytoplasm. The protein resides in the cytosol. Its function is as follows. Acts as a component of the translation initiation factor 2B (eIF2B) complex, which catalyzes the exchange of GDP for GTP on eukaryotic initiation factor 2 (eIF2) gamma subunit. Its guanine nucleotide exchange factor activity is repressed when bound to eIF2 complex phosphorylated on the alpha subunit, thereby limiting the amount of methionyl-initiator methionine tRNA available to the ribosome and consequently global translation is repressed. This chain is Translation initiation factor eIF2B subunit alpha, found in Caenorhabditis elegans.